A 427-amino-acid chain; its full sequence is Tyrosine--tRNA ligase (427 aa).

Position 33 (Tyr33) interacts with L-tyrosine. The 'HIGH' region motif lies at 38–47 (PTASSLTIGN). Residues Tyr168 and Gln172 each contribute to the L-tyrosine site. The short motif at 228–232 (KFGKS) is the 'KMSKS' region element. An ATP-binding site is contributed by Lys231. The S4 RNA-binding domain maps to 361–427 (LDLLSTLTNS…KKNYYLLRFN (67 aa)).

It belongs to the class-I aminoacyl-tRNA synthetase family. TyrS type 1 subfamily. In terms of assembly, homodimer.

Its subcellular location is the cytoplasm. The enzyme catalyses tRNA(Tyr) + L-tyrosine + ATP = L-tyrosyl-tRNA(Tyr) + AMP + diphosphate + H(+). Its function is as follows. Catalyzes the attachment of tyrosine to tRNA(Tyr) in a two-step reaction: tyrosine is first activated by ATP to form Tyr-AMP and then transferred to the acceptor end of tRNA(Tyr). This Cytophaga hutchinsonii (strain ATCC 33406 / DSM 1761 / CIP 103989 / NBRC 15051 / NCIMB 9469 / D465) protein is Tyrosine--tRNA ligase.